A 477-amino-acid chain; its full sequence is RTX-III toxin determinant D (477 aa).

Topologically, residues 1 to 59 (MKLWILGLGEFFQRYRNIWREIWKIRKQLDTPARQKDENEFLPRHLELIETPISKKPRL) are cytoplasmic. The helical transmembrane segment at 60-77 (IAYLIMLFLFLAIVISII) threads the bilayer. Over 78–477 (SKVEIVASAT…ESITESLRER (400 aa)) the chain is Periplasmic.

The protein belongs to the membrane fusion protein (MFP) (TC 8.A.1) family.

Its subcellular location is the cell inner membrane. Functionally, involved in the transport of the toxin RTX-III. The protein is RTX-III toxin determinant D (apxIIID) of Actinobacillus pleuropneumoniae (Haemophilus pleuropneumoniae).